The sequence spans 251 residues: Flap endonuclease Xni (251 aa).

Aspartate 104 serves as a coordination point for Mg(2+). In terms of domain architecture, 5'-3' exonuclease spans 160–249 (VQPQQLPDYW…IDGNLQQLRL (90 aa)). Residues leucine 171, alanine 172, proline 180, valine 182, and isoleucine 185 each coordinate K(+). The interval 184–189 (GIGPKS) is interaction with DNA.

This sequence belongs to the Xni family. Mg(2+) serves as cofactor. The cofactor is K(+).

Has flap endonuclease activity. During DNA replication, flap endonucleases cleave the 5'-overhanging flap structure that is generated by displacement synthesis when DNA polymerase encounters the 5'-end of a downstream Okazaki fragment. This is Flap endonuclease Xni from Escherichia coli O45:K1 (strain S88 / ExPEC).